The primary structure comprises 144 residues: Ninjurin-2 (144 aa).

The Extracellular segment spans residues 1-62 (MESDREIIHL…KSVLEQGPFS (62 aa)). The helix alpha1 stretch occupies residues 27–39 (NHYATKKSVAESM). Positions 40–59 (LDVALFMSNAMRLKSVLEQG) are helix alpha2. A helical membrane pass occupies residues 63–94 (QYYTTLLTLISASLLLQVVIGILLVVIARLNL). The Cytoplasmic segment spans residues 95-98 (NEVE). Residues 99–128 (NQWRLNQLNNAATTLVFITVVINIFITAFG) form a helical membrane-spanning segment. Q105 serves as a coordination point for cholesterol. Residues 129-144 (AHKTGSVAARTSSNPI) lie on the Extracellular side of the membrane.

The protein belongs to the ninjurin family. Homooligomer; in response to stimuli, homooligomerizes into filaments. In contrast to NINJ1, the filament is curved toward the intracellular space, preventing its circularization on a relatively flat membrane to mediate plasma membrane rupture: curvature is caused by cholesterol-binding at the cytoplasmic leaflet.

Its subcellular location is the cell membrane. Its function is as follows. Its role in unclear. In contrast to NINJ1 paralog, does not mediate plasma membrane rupture (cytolysis) downstream of necroptotic and pyroptotic programmed cell death. While it is able to oligomerize and form filaments, filaments are curved toward the intracellular space, preventing circularization to mediate plasma membrane rupture. May act as a homophilic transmembrane adhesion molecule involved in nerve regeneration. Promotes axonal growth. The polypeptide is Ninjurin-2 (Ninj2) (Rattus norvegicus (Rat)).